Here is a 786-residue protein sequence, read N- to C-terminus: Endonuclease MutS2 (786 aa).

335–342 (GPNTGGKT) contributes to the ATP binding site. Positions 529-549 (SQKNAERERKEAEEHRKQSEK) are disordered. The 76-residue stretch at 711 to 786 (LDLRGERYED…GLGVTVVELK (76 aa)) folds into the Smr domain.

This sequence belongs to the DNA mismatch repair MutS family. MutS2 subfamily. In terms of assembly, homodimer. Binds to stalled ribosomes, contacting rRNA.

In terms of biological role, endonuclease that is involved in the suppression of homologous recombination and thus may have a key role in the control of bacterial genetic diversity. Acts as a ribosome collision sensor, splitting the ribosome into its 2 subunits. Detects stalled/collided 70S ribosomes which it binds and splits by an ATP-hydrolysis driven conformational change. Acts upstream of the ribosome quality control system (RQC), a ribosome-associated complex that mediates the extraction of incompletely synthesized nascent chains from stalled ribosomes and their subsequent degradation. Probably generates substrates for RQC. The polypeptide is Endonuclease MutS2 (Bacillus mycoides (strain KBAB4) (Bacillus weihenstephanensis)).